The sequence spans 475 residues: Ribulose bisphosphate carboxylase large chain (475 aa).

A propeptide spanning residues 1–2 (MS) is cleaved from the precursor. P3 is subject to N-acetylproline. Residue K14 is modified to N6,N6,N6-trimethyllysine. Substrate is bound by residues N123 and T173. K175 acts as the Proton acceptor in catalysis. K177 is a substrate binding site. Mg(2+) is bound by residues K201, D203, and E204. Residue K201 is modified to N6-carboxylysine. H294 acts as the Proton acceptor in catalysis. Positions 295, 327, and 379 each coordinate substrate.

The protein belongs to the RuBisCO large chain family. Type I subfamily. As to quaternary structure, heterohexadecamer of 8 large chains and 8 small chains; disulfide-linked. The disulfide link is formed within the large subunit homodimers. Mg(2+) serves as cofactor. In terms of processing, the disulfide bond which can form in the large chain dimeric partners within the hexadecamer appears to be associated with oxidative stress and protein turnover.

The protein localises to the plastid. The protein resides in the chloroplast. It carries out the reaction 2 (2R)-3-phosphoglycerate + 2 H(+) = D-ribulose 1,5-bisphosphate + CO2 + H2O. The catalysed reaction is D-ribulose 1,5-bisphosphate + O2 = 2-phosphoglycolate + (2R)-3-phosphoglycerate + 2 H(+). Functionally, ruBisCO catalyzes two reactions: the carboxylation of D-ribulose 1,5-bisphosphate, the primary event in carbon dioxide fixation, as well as the oxidative fragmentation of the pentose substrate in the photorespiration process. Both reactions occur simultaneously and in competition at the same active site. This Carpinus caroliniana (American hornbeam) protein is Ribulose bisphosphate carboxylase large chain.